Reading from the N-terminus, the 350-residue chain is Proton-activated chloride channel (350 aa).

The interval 1–51 is disordered; sequence MEAIRKELSRSYQELNDETDPIARDPEGAQEEEQEEAASAVVPDRDSDRSN. Topologically, residues 1-63 are cytoplasmic; the sequence is MEAIRKELSR…VHFSRTCLKN (63 aa). A helical membrane pass occupies residues 64–84; it reads VFSVLLIFVYLLLMGVAVFLV. Over 85–297 the chain is Extracellular; it reads YQTITDFRDK…KDPYIQEIQD (213 aa). A helical membrane pass occupies residues 298–318; the sequence is IITANPWSMIALLCSVFLVLF. Over 319–350 the chain is Cytoplasmic; the sequence is KAADFAKLSVKWMIKVRRRHLKKRTRELNHIS.

The protein belongs to the proton-activated chloride channel family.

It localises to the cell membrane. The enzyme catalyses chloride(in) = chloride(out). In terms of biological role, chloride channel gated by pH that facilitates the entry of chloride ions into cells upon exposure to extracellular acidic pH. In Xenopus laevis (African clawed frog), this protein is Proton-activated chloride channel.